Reading from the N-terminus, the 945-residue chain is UvrABC system protein A (945 aa).

31–38 is a binding site for ATP; it reads GLSGSGKS. A C4-type zinc finger spans residues 254–281; that stretch reads CPVCGHSISELEPKLFSFNNPAGACPTC. ABC transporter domains are found at residues 310 to 587 and 607 to 937; these read WDRR…PDSL and RDKK…HFLK. 640 to 647 serves as a coordination point for ATP; that stretch reads GVSGSGKS. A C4-type zinc finger spans residues 740-766; the sequence is CEACQGDGVIKVEMHFLPDIYVPCDVC.

The protein belongs to the ABC transporter superfamily. UvrA family. In terms of assembly, forms a heterotetramer with UvrB during the search for lesions.

Its subcellular location is the cytoplasm. Functionally, the UvrABC repair system catalyzes the recognition and processing of DNA lesions. UvrA is an ATPase and a DNA-binding protein. A damage recognition complex composed of 2 UvrA and 2 UvrB subunits scans DNA for abnormalities. When the presence of a lesion has been verified by UvrB, the UvrA molecules dissociate. This Pseudomonas aeruginosa (strain ATCC 15692 / DSM 22644 / CIP 104116 / JCM 14847 / LMG 12228 / 1C / PRS 101 / PAO1) protein is UvrABC system protein A.